Consider the following 102-residue polypeptide: MASQQIRIRLKSYEHGILDESAAKIVATAERTGAQISGPVPLPTERTLFTVLRSPHKNKDSREQFEIRTHKRLIDILNPTPKTVDSLMKLDLPSGVDIEIKL.

The protein belongs to the universal ribosomal protein uS10 family. As to quaternary structure, part of the 30S ribosomal subunit.

Functionally, involved in the binding of tRNA to the ribosomes. The protein is Small ribosomal subunit protein uS10 of Lactobacillus gasseri (strain ATCC 33323 / DSM 20243 / BCRC 14619 / CIP 102991 / JCM 1131 / KCTC 3163 / NCIMB 11718 / NCTC 13722 / AM63).